Consider the following 578-residue polypeptide: Type I restriction enzyme MjaVIII methylase subunit (578 aa).

Residues 250–255 (EVYTPI), 280–282 (SGS), E303, and 332–333 (DS) contribute to the S-adenosyl-L-methionine site.

Belongs to the N(4)/N(6)-methyltransferase family. The type I restriction/modification system is composed of three polypeptides R, M and S.

It carries out the reaction a 2'-deoxyadenosine in DNA + S-adenosyl-L-methionine = an N(6)-methyl-2'-deoxyadenosine in DNA + S-adenosyl-L-homocysteine + H(+). Its function is as follows. The subtype gamma methyltransferase (M) subunit of a type I restriction enzyme. The M and S subunits together form a methyltransferase (MTase) that methylates A-2 on the top and A-3 on the bottom strand of the sequence 5'-GAYN(5)GTAA-3'. In the presence of the R subunit the complex can also act as an endonuclease, binding to the same target sequence but cutting the DNA some distance from this site. Whether the DNA is cut or modified depends on the methylation state of the target sequence. When the target site is unmodified, the DNA is cut. When the target site is hemimethylated, the complex acts as a maintenance MTase modifying the DNA so that both strands become methylated. After locating a non-methylated recognition site, the enzyme complex serves as a molecular motor that translocates DNA in an ATP-dependent manner until a collision occurs that triggers cleavage. The protein is Type I restriction enzyme MjaVIII methylase subunit of Methanocaldococcus jannaschii (strain ATCC 43067 / DSM 2661 / JAL-1 / JCM 10045 / NBRC 100440) (Methanococcus jannaschii).